Reading from the N-terminus, the 1435-residue chain is DNA polymerase III PolC-type (1435 aa).

The 157-residue stretch at 420-576 folds into the Exonuclease domain; that stretch reads YVVFDVETTG…YDTEATAYIF (157 aa).

It belongs to the DNA polymerase type-C family. PolC subfamily.

The protein localises to the cytoplasm. The enzyme catalyses DNA(n) + a 2'-deoxyribonucleoside 5'-triphosphate = DNA(n+1) + diphosphate. Functionally, required for replicative DNA synthesis. This DNA polymerase also exhibits 3' to 5' exonuclease activity. The chain is DNA polymerase III PolC-type from Staphylococcus aureus.